Reading from the N-terminus, the 285-residue chain is Diaminopimelate epimerase 2 (285 aa).

Substrate-binding positions include Asn11, Asn63, 73 to 74 (GN), Asn158, Asn191, 209 to 210 (ER), and 219 to 220 (GS).

Belongs to the diaminopimelate epimerase family. As to quaternary structure, homodimer.

It is found in the cytoplasm. It catalyses the reaction (2S,6S)-2,6-diaminopimelate = meso-2,6-diaminopimelate. The protein operates within amino-acid biosynthesis; L-lysine biosynthesis via DAP pathway; DL-2,6-diaminopimelate from LL-2,6-diaminopimelate: step 1/1. In terms of biological role, catalyzes the stereoinversion of LL-2,6-diaminopimelate (L,L-DAP) to meso-diaminopimelate (meso-DAP), a precursor of L-lysine and an essential component of the bacterial peptidoglycan. In Nostoc sp. (strain PCC 7120 / SAG 25.82 / UTEX 2576), this protein is Diaminopimelate epimerase 2.